A 182-amino-acid chain; its full sequence is Ribosome maturation factor RimM (182 aa).

The PRC barrel domain occupies 101–174; sequence QDEYFIHQLY…QIVVRLLPGL (74 aa).

Belongs to the RimM family. In terms of assembly, binds ribosomal protein uS19.

The protein localises to the cytoplasm. Its function is as follows. An accessory protein needed during the final step in the assembly of 30S ribosomal subunit, possibly for assembly of the head region. Essential for efficient processing of 16S rRNA. May be needed both before and after RbfA during the maturation of 16S rRNA. It has affinity for free ribosomal 30S subunits but not for 70S ribosomes. This is Ribosome maturation factor RimM from Roseiflexus sp. (strain RS-1).